The sequence spans 323 residues: Fructose-1,6-bisphosphatase class 1 (323 aa).

Residues E90, D111, L113, and D114 each coordinate Mg(2+). Substrate contacts are provided by residues 114-117 (DGSS), Y222, and K253. E259 is a binding site for Mg(2+).

The protein belongs to the FBPase class 1 family. Homotetramer. The cofactor is Mg(2+).

The protein resides in the cytoplasm. The enzyme catalyses beta-D-fructose 1,6-bisphosphate + H2O = beta-D-fructose 6-phosphate + phosphate. It functions in the pathway carbohydrate biosynthesis; gluconeogenesis. In Pelobacter propionicus (strain DSM 2379 / NBRC 103807 / OttBd1), this protein is Fructose-1,6-bisphosphatase class 1.